A 729-amino-acid chain; its full sequence is Polyribonucleotide nucleotidyltransferase (729 aa).

Asp-485 and Asp-491 together coordinate Mg(2+). One can recognise a KH domain in the interval 552 to 611 (PRITTMKVAEDKIRTIIGKGGATIKGLIESTGVSIDIDDSGVIQLFSPDKMALEEAQKQI). Residues 621 to 689 (GQTYQGKVSK…KQGRVKLEWK (69 aa)) enclose the S1 motif domain.

The protein belongs to the polyribonucleotide nucleotidyltransferase family. In terms of assembly, component of the RNA degradosome, which is a multiprotein complex involved in RNA processing and mRNA degradation. Mg(2+) is required as a cofactor.

It is found in the cytoplasm. The enzyme catalyses RNA(n+1) + phosphate = RNA(n) + a ribonucleoside 5'-diphosphate. Its function is as follows. Involved in mRNA degradation. Catalyzes the phosphorolysis of single-stranded polyribonucleotides processively in the 3'- to 5'-direction. In Legionella pneumophila (strain Corby), this protein is Polyribonucleotide nucleotidyltransferase.